The following is a 494-amino-acid chain: Transcription termination factor MTERF4, chloroplastic (494 aa).

Residues 1-54 (MMKSLLFSAHPTSLLLPAPRLRRLLRLRAASSASASAPPRADRRSPGTPSRRPS) constitute a chloroplast transit peptide. 2 disordered regions span residues 32–61 (SASA…YARP) and 457–494 (VEEM…EFVR). The span at 46-56 (PGTPSRRPSSS) shows a compositional bias: low complexity. Acidic residues-rich tracts occupy residues 457-466 (VEEMEREDSS) and 473-494 (DEVE…EFVR).

It belongs to the mTERF family.

The protein resides in the plastid. It is found in the chloroplast stroma. In terms of biological role, transcription termination factor required for processing and steady-state levels of plastid transcripts. Required for splicing of the chloroplastic group II intron. Required for the accumulation of 16S and 23S ribosomes. The protein is Transcription termination factor MTERF4, chloroplastic of Zea mays (Maize).